The following is a 371-amino-acid chain: S-adenosylmethionine:tRNA ribosyltransferase-isomerase (371 aa).

It belongs to the QueA family. As to quaternary structure, monomer.

The protein localises to the cytoplasm. It carries out the reaction 7-aminomethyl-7-carbaguanosine(34) in tRNA + S-adenosyl-L-methionine = epoxyqueuosine(34) in tRNA + adenine + L-methionine + 2 H(+). It functions in the pathway tRNA modification; tRNA-queuosine biosynthesis. Functionally, transfers and isomerizes the ribose moiety from AdoMet to the 7-aminomethyl group of 7-deazaguanine (preQ1-tRNA) to give epoxyqueuosine (oQ-tRNA). The polypeptide is S-adenosylmethionine:tRNA ribosyltransferase-isomerase (Rickettsia akari (strain Hartford)).